The following is a 259-amino-acid chain: uncharacterized protein (259 aa).

Belongs to the ParA family.

This is an uncharacterized protein from Methanocaldococcus jannaschii (strain ATCC 43067 / DSM 2661 / JAL-1 / JCM 10045 / NBRC 100440) (Methanococcus jannaschii).